Reading from the N-terminus, the 412-residue chain is Arginine biosynthesis bifunctional protein ArgJ (412 aa).

Residues threonine 155, lysine 181, threonine 192, glutamate 279, asparagine 407, and serine 412 each coordinate substrate. Threonine 192 (nucleophile) is an active-site residue.

It belongs to the ArgJ family. In terms of assembly, heterotetramer of two alpha and two beta chains.

It localises to the cytoplasm. The catalysed reaction is N(2)-acetyl-L-ornithine + L-glutamate = N-acetyl-L-glutamate + L-ornithine. The enzyme catalyses L-glutamate + acetyl-CoA = N-acetyl-L-glutamate + CoA + H(+). Its pathway is amino-acid biosynthesis; L-arginine biosynthesis; L-ornithine and N-acetyl-L-glutamate from L-glutamate and N(2)-acetyl-L-ornithine (cyclic): step 1/1. It functions in the pathway amino-acid biosynthesis; L-arginine biosynthesis; N(2)-acetyl-L-ornithine from L-glutamate: step 1/4. Its function is as follows. Catalyzes two activities which are involved in the cyclic version of arginine biosynthesis: the synthesis of N-acetylglutamate from glutamate and acetyl-CoA as the acetyl donor, and of ornithine by transacetylation between N(2)-acetylornithine and glutamate. The chain is Arginine biosynthesis bifunctional protein ArgJ from Aromatoleum aromaticum (strain DSM 19018 / LMG 30748 / EbN1) (Azoarcus sp. (strain EbN1)).